We begin with the raw amino-acid sequence, 199 residues long: Peroxiredoxin-1 (199 aa).

Serine 2 bears the N-acetylserine mark. The Thioredoxin domain maps to 6–165; it reads AKIGHPAPNF…TLRLVQAFQF (160 aa). Lysine 7 bears the N6-acetyllysine; alternate mark. Lysine 7 is covalently cross-linked (Glycyl lysine isopeptide (Lys-Gly) (interchain with G-Cter in SUMO2); alternate). 2 positions are modified to N6-acetyllysine: lysine 16 and lysine 27. Residue serine 32 is modified to Phosphoserine. Lysine 35 carries the N6-acetyllysine; alternate modification. Lysine 35 is subject to N6-succinyllysine; alternate. Catalysis depends on cysteine 52, which acts as the Cysteine sulfenic acid (-SOH) intermediate. Threonine 90 is modified (phosphothreonine; by CDK1). Lysine 120 participates in a covalent cross-link: Glycyl lysine isopeptide (Lys-Gly) (interchain with G-Cter in SUMO2). Residue lysine 136 is modified to N6-acetyllysine. The segment at 176-199 is disordered; sequence GWKPGSDTIKPDVQKSKEYFSKQK. Residues 184 to 199 are compositionally biased toward basic and acidic residues; it reads IKPDVQKSKEYFSKQK. Residue lysine 185 forms a Glycyl lysine isopeptide (Lys-Gly) (interchain with G-Cter in SUMO1) linkage. Lysine 197 is modified (N6-acetyllysine).

The protein belongs to the peroxiredoxin family. AhpC/Prx1 subfamily. Homodimer; disulfide-linked, upon oxidation. 5 homodimers assemble to form a ring-like decamer. Interacts with GDPD5; forms a mixed-disulfide with GDPD5. Interacts with SESN1 and SESN2. Interacts with FAM107A. Phosphorylated on Thr-90 during the M-phase, which leads to a more than 80% decrease in enzymatic activity. In terms of processing, acetylation increases reducing activity and resistance to superoxidation. Deacetylated by HDAC6 which decreases reducing activity. Post-translationally, the enzyme can be inactivated by further oxidation of the cysteine sulfenic acid (C(P)-SOH) to sulphinic acid (C(P)-SO2H) instead of its condensation to a disulfide bond. It can be reactivated by forming a transient disulfide bond with sulfiredoxin SRXN1, which reduces the cysteine sulfinic acid in an ATP- and Mg-dependent manner.

It is found in the cytoplasm. It localises to the melanosome. It catalyses the reaction a hydroperoxide + [thioredoxin]-dithiol = an alcohol + [thioredoxin]-disulfide + H2O. In terms of biological role, thiol-specific peroxidase that catalyzes the reduction of hydrogen peroxide and organic hydroperoxides to water and alcohols, respectively. Plays a role in cell protection against oxidative stress by detoxifying peroxides and as sensor of hydrogen peroxide-mediated signaling events. Might participate in the signaling cascades of growth factors and tumor necrosis factor-alpha by regulating the intracellular concentrations of H(2)O(2). Reduces an intramolecular disulfide bond in GDPD5 that gates the ability to GDPD5 to drive postmitotic motor neuron differentiation. The sequence is that of Peroxiredoxin-1 (PRDX1) from Homo sapiens (Human).